The sequence spans 134 residues: Putative pre-16S rRNA nuclease (134 aa).

This sequence belongs to the YqgF nuclease family.

The protein localises to the cytoplasm. Functionally, could be a nuclease involved in processing of the 5'-end of pre-16S rRNA. The sequence is that of Putative pre-16S rRNA nuclease from Helicobacter pylori (strain J99 / ATCC 700824) (Campylobacter pylori J99).